Here is a 2643-residue protein sequence, read N- to C-terminus: BAH and coiled-coil domain-containing protein 1 (2643 aa).

Disordered stretches follow at residues 23 to 45 (SAAA…HFQP) and 84 to 106 (SAAS…RGSH). An N6-acetyllysine modification is found at lysine 220. Composition is skewed to basic and acidic residues over residues 224-249 (KEKV…DRQK) and 683-702 (ERPD…DGEV). Disordered regions lie at residues 224 to 273 (KEKV…SCEG), 674 to 704 (PATK…EVRQ), 721 to 758 (GRPD…LESE), 985 to 1023 (RKPE…PSSA), and 1038 to 1299 (TLKT…KALP). A compositionally biased stretch (basic and acidic residues) spans 985–1003 (RKPEDRHMELEEAAQEKTP). A compositionally biased stretch (pro residues) spans 1133 to 1149 (RPEPPRTFLPGEPPPCS). Residues 1210–1224 (ATGQTNSTQGGMQNE) are compositionally biased toward polar residues. Residues 1269–1284 (QEEETQLEESGGDSEV) show a composition bias toward acidic residues. Coiled-coil stretches lie at residues 1346–1373 (ALLS…DVLA) and 1437–1486 (LKAA…SSRS). Over residues 1466 to 1484 (QRELARLQRRHDHEREESS) the composition is skewed to basic and acidic residues. Disordered stretches follow at residues 1466–1520 (QREL…DSKK), 1537–1559 (GDEP…QSVS), 1604–1641 (KEAA…GREM), 1746–1781 (RAPG…SRDT), 1875–1896 (FDED…GVQL), 2055–2124 (SSCR…HFLG), 2322–2341 (CPSS…TGVP), and 2349–2386 (SMSS…SDDE). Over residues 1487-1501 (PARRGPGRPRKRKHS) the composition is skewed to basic residues. Residues 1631-1641 (PHPDGDSGREM) are compositionally biased toward basic and acidic residues. Basic residues predominate over residues 1757-1767 (GKKKAKGKVKT). The span at 1875-1892 (FDEDDTSFSDEEEEEEEA) shows a compositional bias: acidic residues. Low complexity predominate over residues 2349–2374 (SMSSSSSGSSTSSSSGSVSTSSLCSS). Residues 2375–2386 (DNEDSSYSSDDE) show a composition bias toward acidic residues. Positions 2517–2637 (ETLRIGDCAV…PTTGRLVTAD (121 aa)) constitute a BAH domain.

The polypeptide is BAH and coiled-coil domain-containing protein 1 (Bahcc1) (Mus musculus (Mouse)).